Here is a 257-residue protein sequence, read N- to C-terminus: Large ribosomal subunit protein uL2 (257 aa).

A disordered region spans residues 207–231 (VEHPFGGGNHQHIGKPSTIRRDAPA).

It belongs to the universal ribosomal protein uL2 family. As to quaternary structure, component of the large ribosomal subunit.

The protein resides in the cytoplasm. In terms of biological role, component of the large ribosomal subunit. The ribosome is a large ribonucleoprotein complex responsible for the synthesis of proteins in the cell. This Xenopus tropicalis (Western clawed frog) protein is Large ribosomal subunit protein uL2 (rpl8).